A 282-amino-acid chain; its full sequence is Undecaprenyl-diphosphatase (282 aa).

Helical transmembrane passes span 51–71 (TLVA…AAVI), 87–107 (MGWM…LFET), 115–135 (SLYW…LAEG), 191–211 (ATAA…AGLY), 229–249 (NILV…AFLL), and 259–279 (IFIA…ATGV).

This sequence belongs to the UppP family.

The protein localises to the cell inner membrane. It carries out the reaction di-trans,octa-cis-undecaprenyl diphosphate + H2O = di-trans,octa-cis-undecaprenyl phosphate + phosphate + H(+). Its function is as follows. Catalyzes the dephosphorylation of undecaprenyl diphosphate (UPP). Confers resistance to bacitracin. In Pelodictyon phaeoclathratiforme (strain DSM 5477 / BU-1), this protein is Undecaprenyl-diphosphatase.